A 129-amino-acid polypeptide reads, in one-letter code: Glycine cleavage system H protein (129 aa).

Positions 24–106 (SYTVGITEHA…YGEGWFFRVM (83 aa)) constitute a Lipoyl-binding domain. The residue at position 65 (K65) is an N6-lipoyllysine.

It belongs to the GcvH family. The glycine cleavage system is composed of four proteins: P, T, L and H. (R)-lipoate is required as a cofactor.

Its function is as follows. The glycine cleavage system catalyzes the degradation of glycine. The H protein shuttles the methylamine group of glycine from the P protein to the T protein. The polypeptide is Glycine cleavage system H protein (Shewanella sp. (strain MR-7)).